Here is a 662-residue protein sequence, read N- to C-terminus: DNA ligase (662 aa).

NAD(+) is bound by residues 31–35 (DKDYD) and 79–80 (SL). Lysine 121 serves as the catalytic N6-AMP-lysine intermediate. NAD(+)-binding residues include arginine 143, glutamate 177, and lysine 313. Zn(2+) is bound by residues cysteine 406, cysteine 409, cysteine 422, and cysteine 428. Residues 586 to 662 (VLESPFMGKT…LSEEEFENMI (77 aa)) form the BRCT domain.

This sequence belongs to the NAD-dependent DNA ligase family. LigA subfamily. Mg(2+) serves as cofactor. Mn(2+) is required as a cofactor.

It catalyses the reaction NAD(+) + (deoxyribonucleotide)n-3'-hydroxyl + 5'-phospho-(deoxyribonucleotide)m = (deoxyribonucleotide)n+m + AMP + beta-nicotinamide D-nucleotide.. DNA ligase that catalyzes the formation of phosphodiester linkages between 5'-phosphoryl and 3'-hydroxyl groups in double-stranded DNA using NAD as a coenzyme and as the energy source for the reaction. It is essential for DNA replication and repair of damaged DNA. In Clostridium perfringens (strain SM101 / Type A), this protein is DNA ligase.